We begin with the raw amino-acid sequence, 159 residues long: Insulin-like peptide 7 (159 aa).

The first 31 residues, 1–31, serve as a signal peptide directing secretion; it reads MTRMIIQNSGSWTLCGAVLLFVLPLIPTPEA. 3 disulfides stabilise this stretch: cysteine 63/cysteine 136, cysteine 75/cysteine 150, and cysteine 135/cysteine 141. A propeptide spans 90–121 (connecting peptide); the sequence is TGNDEAWIKKTTTEPDGSTWLHVNYANMFLRS.

The protein belongs to the insulin family. Heterodimer of a B chain and an A chain linked by two disulfide bonds. Broadly expressed at a low level throughout the embryo, except the yolk. Expressed at a moderate level in the embryonic midgut. Larval expression is restricted to ten cells of the ventral nerve cord - in four pairs of centrally located cells in the most posterior abdominal segments and in one pair of dorsally located cells in the A1 or A2 segments.

The protein resides in the secreted. Its function is as follows. Possible ligand of InR/insulin-like receptor. This chain is Insulin-like peptide 7, found in Drosophila melanogaster (Fruit fly).